The chain runs to 327 residues: Beta-ketoacyl-[acyl-carrier-protein] synthase III (327 aa).

Active-site residues include Cys114 and His254. The tract at residues 255 to 259 (QANRR) is ACP-binding. Asn284 is a catalytic residue.

The protein belongs to the thiolase-like superfamily. FabH family. As to quaternary structure, homodimer.

The protein localises to the cytoplasm. It carries out the reaction malonyl-[ACP] + acetyl-CoA + H(+) = 3-oxobutanoyl-[ACP] + CO2 + CoA. It functions in the pathway lipid metabolism; fatty acid biosynthesis. Its function is as follows. Catalyzes the condensation reaction of fatty acid synthesis by the addition to an acyl acceptor of two carbons from malonyl-ACP. Catalyzes the first condensation reaction which initiates fatty acid synthesis and may therefore play a role in governing the total rate of fatty acid production. Possesses both acetoacetyl-ACP synthase and acetyl transacylase activities. Its substrate specificity determines the biosynthesis of branched-chain and/or straight-chain of fatty acids. The sequence is that of Beta-ketoacyl-[acyl-carrier-protein] synthase III from Lactobacillus helveticus (strain DPC 4571).